A 451-amino-acid polypeptide reads, in one-letter code: CDP-diacylglycerol--serine O-phosphatidyltransferase PssA (451 aa).

PLD phosphodiesterase domains are found at residues 27–224 (VDFF…ELRD) and 239–451 (SVTP…SRIL). A CDP-1,2-diacyl-sn-glycerol-binding residues include leucine 56, tyrosine 57, arginine 91, arginine 94, arginine 96, isoleucine 97, glutamate 132, alanine 133, valine 136, histidine 138, lysine 140, glycine 152, tyrosine 159, and arginine 167. Histidine 138 is an active-site residue. Aspartate 169 is an active-site residue. A CDP-1,2-diacyl-sn-glycerol-binding residues include tyrosine 273, aspartate 305, phenylalanine 306, isoleucine 316, isoleucine 317, leucine 320, leucine 323, and tyrosine 324. The active site involves histidine 357. A CDP-1,2-diacyl-sn-glycerol-binding residues include lysine 359, asparagine 374, and arginine 378. The active site involves glutamate 385. Residues leucine 438, isoleucine 447, isoleucine 450, and leucine 451 each contribute to the a CDP-1,2-diacyl-sn-glycerol site.

It belongs to the CDP-alcohol phosphatidyltransferase class-II family. As to quaternary structure, multimeric. Interacts with ACP, YbgC and PlsB, forming altogether a complex at the inner membrane. Monomeric and dimeric; existing in equilibrium, but the monomer probably exhibits preferential membrane association.

It is found in the cytoplasm. It localises to the cell inner membrane. The enzyme catalyses a CDP-1,2-diacyl-sn-glycerol + L-serine = a 1,2-diacyl-sn-glycero-3-phospho-L-serine + CMP + H(+). It functions in the pathway phospholipid metabolism; phosphatidylethanolamine biosynthesis; phosphatidylethanolamine from CDP-diacylglycerol: step 1/2. In terms of biological role, catalyzes the conversion of cytidine diphosphate diacylglycerol (CDP-DG) and L-serine into phosphatidylserine. Essential for biosynthesis of phosphatidylethanolamine, one of the major membrane phospholipids. Phosphatidylserine is later converted into phosphatidylethanolamine via the action of phosphatidylserine decarboxylase psd. Associates with the bacterial membrane for its role, which depends on the levels of anionic phospholipids in the membrane. In Escherichia coli (strain K12), this protein is CDP-diacylglycerol--serine O-phosphatidyltransferase PssA (pssA).